Here is a 229-residue protein sequence, read N- to C-terminus: Orotidine 5'-phosphate decarboxylase (229 aa).

Residues Asp10, Lys32, 59–68 (DLKFHDIPNT), Thr119, Arg180, Gln189, Gly209, and Arg210 each bind substrate. Catalysis depends on Lys61, which acts as the Proton donor.

It belongs to the OMP decarboxylase family. Type 1 subfamily. Homodimer.

It catalyses the reaction orotidine 5'-phosphate + H(+) = UMP + CO2. The protein operates within pyrimidine metabolism; UMP biosynthesis via de novo pathway; UMP from orotate: step 2/2. In terms of biological role, catalyzes the decarboxylation of orotidine 5'-monophosphate (OMP) to uridine 5'-monophosphate (UMP). This is Orotidine 5'-phosphate decarboxylase from Legionella pneumophila subsp. pneumophila (strain Philadelphia 1 / ATCC 33152 / DSM 7513).